Consider the following 109-residue polypeptide: Prefoldin subunit 1 (109 aa).

Ser-2 is subject to N-acetylserine.

It belongs to the prefoldin subunit beta family. As to quaternary structure, heterohexamer of two PFD-alpha type and four PFD-beta type subunits.

It localises to the cytoplasm. Its function is as follows. Binds specifically to cytosolic chaperonin (c-CPN) and transfers target proteins to it. Binds to nascent polypeptide chain and promotes folding in an environment in which there are many competing pathways for nonnative proteins. This chain is Prefoldin subunit 1 (PFD1), found in Saccharomyces cerevisiae (strain ATCC 204508 / S288c) (Baker's yeast).